The sequence spans 449 residues: L10-interacting MYB domain-containing protein (449 aa).

The 64-residue stretch at 162–225 (SNPQTKGYWS…YTRPQLKNHW (64 aa)) folds into the Myb-like domain. Residues 297 to 324 (TYTPPSRSRKKLLHNRSESPQWRDTTPL) form a disordered region. Polar residues predominate over residues 314–324 (ESPQWRDTTPL).

Interacts with RPL10A. In terms of tissue distribution, expressed in seedlings, leaves, roots, stems and flowers.

The protein resides in the nucleus. Its function is as follows. Transcriptional repressor that associates with ribosomal protein promoters. The protein is L10-interacting MYB domain-containing protein of Arabidopsis thaliana (Mouse-ear cress).